Reading from the N-terminus, the 114-residue chain is Nucleoid-associated protein THEYE_A1069 (114 aa).

It belongs to the YbaB/EbfC family. Homodimer.

The protein resides in the cytoplasm. It localises to the nucleoid. Binds to DNA and alters its conformation. May be involved in regulation of gene expression, nucleoid organization and DNA protection. This Thermodesulfovibrio yellowstonii (strain ATCC 51303 / DSM 11347 / YP87) protein is Nucleoid-associated protein THEYE_A1069.